The following is a 1280-amino-acid chain: Clustered mitochondria protein homolog (1280 aa).

Over residues 1-27 (MAASSNDASKSAMANSNVTTEVAQTPS) the composition is skewed to polar residues. Disordered regions lie at residues 1-49 (MAAS…GQLP) and 169-189 (GLDQ…LADY). Over residues 32-43 (VNGEVEATEEDG) the composition is skewed to acidic residues. The region spanning 338-582 (DLARTQESYL…RLTPLDVAWI (245 aa)) is the Clu domain. Disordered stretches follow at residues 633 to 669 (KANK…EPEQ), 905 to 943 (GAAV…AVSL), and 1214 to 1280 (TGRN…TQKP). Residues 635–648 (NKARGGRRRLPKAQ) are compositionally biased toward basic residues. Basic and acidic residues predominate over residues 649-669 (KKADAGKEVDGEKKAEAEPEQ). Residues 1221–1235 (PAAATPSVSDAAAAA) are compositionally biased toward low complexity. Basic and acidic residues predominate over residues 1245-1261 (VDQRKIEDLLKYIEGES). Positions 1265–1280 (PTKKRTQNPRKRTQKP) are enriched in basic residues.

The protein belongs to the CLU family. May associate with the eukaryotic translation initiation factor 3 (eIF-3) complex.

The protein localises to the cytoplasm. Functionally, mRNA-binding protein involved in proper cytoplasmic distribution of mitochondria. The polypeptide is Clustered mitochondria protein homolog (Phaeosphaeria nodorum (strain SN15 / ATCC MYA-4574 / FGSC 10173) (Glume blotch fungus)).